The primary structure comprises 105 residues: Putative zinc finger protein 861 (105 aa).

A C2H2-type zinc finger spans residues 75 to 97 (YTCKPCGNAFRFHHSFHIHERPH).

The sequence is that of Putative zinc finger protein 861 (ZNF861P) from Homo sapiens (Human).